A 67-amino-acid polypeptide reads, in one-letter code: Large ribosomal subunit protein bL31 (67 aa).

Belongs to the bacterial ribosomal protein bL31 family. Type A subfamily. Part of the 50S ribosomal subunit.

Its function is as follows. Binds the 23S rRNA. The sequence is that of Large ribosomal subunit protein bL31 from Leptospira borgpetersenii serovar Hardjo-bovis (strain JB197).